Consider the following 354-residue polypeptide: Caffeate O-methyltransferase-like protein 2 (354 aa).

S-adenosyl-L-homocysteine is bound by residues Gly198, Asp221, Met242, and Lys255. His259 functions as the Proton acceptor in the catalytic mechanism. Active-site residues include Glu287 and Glu319.

It belongs to the class I-like SAM-binding methyltransferase superfamily. Cation-independent O-methyltransferase family. COMT subfamily.

The protein is Caffeate O-methyltransferase-like protein 2 of Oryza sativa subsp. japonica (Rice).